The following is a 739-amino-acid chain: Tegument protein UL47 (739 aa).

The span at 1–13 (MDAARDGRPERRR) shows a compositional bias: basic and acidic residues. Disordered stretches follow at residues 1 to 123 (MDAA…QDYL) and 154 to 198 (QFPP…DDAA). The Nuclear localization signal motif lies at 10–30 (ERRRAVSGTYRTHPFQRPSAR). Basic residues predominate over residues 28 to 53 (SARRSAGRPARCGRRGRGAPRVRRPR). Residues 62–87 (EDTSEDENVYDYIDGDSSDSADDYDS) are compositionally biased toward acidic residues. Residues 94–121 (RGPNHGAGDAMDTDAPPERAPEGGAPQD) carry the Nuclear export signal motif. A Nuclear export signal motif is present at residues 483–493 (LSAYLTLFVAL).

This sequence belongs to the alphaherpesvirinae HHV-1 UL47 family. As to quaternary structure, interacts with US3 kinase. Interacts with UL31 and UL34; these interactions seem important for efficient virion nuclear egress. Interacts with UL41/VHS. Interacts with host DDB1. Post-translationally, monoubiquitinated. In terms of processing, phosphorylated by US3. This phosphorylation is required for proper nuclear localization.

Its subcellular location is the virion tegument. It is found in the host nucleus. The protein localises to the host cytoplasm. In terms of biological role, tegument protein that can bind to various RNA transcripts. Plays a role in the attenuation of selective viral and cellular mRNA degradation by modulating the activity of host shutoff RNase UL41/VHS. Also plays a role in the primary envelopment of virions in the perinuclear space, probably by interacting with two nuclear egress proteins UL31 and UL34. This chain is Tegument protein UL47, found in Bovine herpesvirus 1.1 (strain Cooper) (BoHV-1).